The primary structure comprises 406 residues: Phosphopentomutase (406 aa).

Positions 10, 305, 310, 346, 347, and 358 each coordinate Mn(2+).

This sequence belongs to the phosphopentomutase family. It depends on Mn(2+) as a cofactor.

The protein resides in the cytoplasm. The catalysed reaction is 2-deoxy-alpha-D-ribose 1-phosphate = 2-deoxy-D-ribose 5-phosphate. It carries out the reaction alpha-D-ribose 1-phosphate = D-ribose 5-phosphate. Its pathway is carbohydrate degradation; 2-deoxy-D-ribose 1-phosphate degradation; D-glyceraldehyde 3-phosphate and acetaldehyde from 2-deoxy-alpha-D-ribose 1-phosphate: step 1/2. Its function is as follows. Isomerase that catalyzes the conversion of deoxy-ribose 1-phosphate (dRib-1-P) and ribose 1-phosphate (Rib-1-P) to deoxy-ribose 5-phosphate (dRib-5-P) and ribose 5-phosphate (Rib-5-P), respectively. The sequence is that of Phosphopentomutase from Vibrio cholerae serotype O1 (strain ATCC 39315 / El Tor Inaba N16961).